Consider the following 337-residue polypeptide: Fructose-1,6-bisphosphatase class 1 (337 aa).

E91, D113, L115, and D116 together coordinate Mg(2+). Substrate is bound by residues 116–119, N209, Y242, and K275; that span reads DGSS. E281 serves as a coordination point for Mg(2+).

This sequence belongs to the FBPase class 1 family. Homotetramer. Requires Mg(2+) as cofactor.

The protein resides in the cytoplasm. It carries out the reaction beta-D-fructose 1,6-bisphosphate + H2O = beta-D-fructose 6-phosphate + phosphate. Its pathway is carbohydrate biosynthesis; gluconeogenesis. The chain is Fructose-1,6-bisphosphatase class 1 from Nitratidesulfovibrio vulgaris (strain DP4) (Desulfovibrio vulgaris).